The chain runs to 594 residues: Homeobox protein prospero homolog 1 (594 aa).

2 stretches are compositionally biased toward polar residues: residues 1–13 (MSSGLPSIAATAQ) and 36–50 (PPVNSNGSTPNSSNR). 3 disordered regions span residues 1–20 (MSSGLPSIAATAQPSANGFS), 30–180 (IYYS…FQPQ), and 358–389 (DTSSEMKKKRTKVEIKKEDAMSSRASPLSASA). Positions 73–101 (STSVSSNSSSSSSTSNTNSTPSSSSTSSK) are enriched in low complexity. Residues 105–117 (EGMTETETMTASI) are compositionally biased toward polar residues. The span at 118 to 135 (EQEKVIQNEESEAGKDGM) shows a compositional bias: basic and acidic residues. Positions 136–162 (EEHDDGMNDFEIIDDTNDEVEESEERE) are enriched in acidic residues. The segment covering 369 to 378 (KVEIKKEDAM) has biased composition (basic and acidic residues). Positions 379-389 (SSRASPLSASA) are enriched in low complexity. The region spanning 435-493 (SSMLTPMHLRKAKLMFFYTRYPNSNLLKSYFPDIRFNKNNTAQLVKWFSNFREFYYNQM) is the Prospero-type homeo domain. The segment at 435–593 (SSMLTPMHLR…KEPNFLERLE (159 aa)) is homeo-Prospero. In terms of domain architecture, Prospero spans 494–593 (EKFARQALAE…KEPNFLERLE (100 aa)).

The protein belongs to the Prospero homeodomain family.

The protein localises to the nucleus. In terms of biological role, transcription factor involved in developmental processes. Controls the transcription of genes required for excretory canal formation. This is Homeobox protein prospero homolog 1 from Caenorhabditis elegans.